We begin with the raw amino-acid sequence, 224 residues long: Pro-thyrotropin-releasing hormone-B (224 aa).

Residues 1–15 form the signal peptide; it reads MMFLWWLLLLGTAIS. Q75 carries the post-translational modification Pyrrolidone carboxylic acid. Position 77 is a proline amide (P77). Over residues 86–101 the composition is skewed to basic and acidic residues; sequence EKRQHPGKRDLEDLQL. 2 disordered regions span residues 86 to 131 and 150 to 212; these read EKRQ…DWSR and RQHP…NSGN. The residue at position 89 (Q89) is a Pyrrolidone carboxylic acid. P91 is modified (proline amide). The residue at position 105 (Q105) is a Pyrrolidone carboxylic acid. P107 is modified (proline amide). A compositionally biased stretch (basic and acidic residues) spans 110–129; it reads RYLEDMEKRQHPGKREEGDW. Position 119 is a pyrrolidone carboxylic acid (Q119). P121 bears the Proline amide mark. The residue at position 151 (Q151) is a Pyrrolidone carboxylic acid. Position 153 is a proline amide (P153). Position 166 is a pyrrolidone carboxylic acid (Q166). P168 bears the Proline amide mark. A compositionally biased stretch (basic and acidic residues) spans 182 to 199; it reads ENSKEVGKRQHPGKRYDP. Q191 is subject to Pyrrolidone carboxylic acid. At P193 the chain carries Proline amide.

Belongs to the TRH family.

It is found in the secreted. The chain is Pro-thyrotropin-releasing hormone-B (trh-b) from Xenopus laevis (African clawed frog).